The chain runs to 331 residues: Type 2 lactosamine alpha-2,3-sialyltransferase (331 aa).

At 1-4 the chain is on the cytoplasmic side; it reads MKGY. A helical; Signal-anchor for type II membrane protein transmembrane segment spans residues 5–25; it reads VVAIFLSSIFLYYVLYCILWG. Residues 26 to 331 are Lumenal-facing; sequence TNGYWFPNEE…KKMVINLTQN (306 aa). Asn-129, Asn-181, Asn-295, Asn-308, and Asn-327 each carry an N-linked (GlcNAc...) asparagine glycan.

Belongs to the glycosyltransferase 29 family.

It is found in the golgi apparatus membrane. It catalyses the reaction a neolactoside nLc4Cer(d18:1(4E)) + CMP-N-acetyl-beta-neuraminate = a neolactoside IV(3)-alpha-NeuAc-nLc4Cer(d18:1(4E)) + CMP + H(+). The enzyme catalyses a beta-D-galactosyl-(1-&gt;4)-N-acetyl-beta-D-glucosaminyl derivative + CMP-N-acetyl-beta-neuraminate = an N-acetyl-alpha-neuraminyl-(2-&gt;3)-beta-D-galactosyl-(1-&gt;4)-N-acetyl-beta-D-glucosaminyl derivative + CMP + H(+). It carries out the reaction a neolactoside nLc6Cer(d18:1(4E)) + CMP-N-acetyl-beta-neuraminate = a neolactoside VI(3)-alpha-NeuNAc-nLc6Cer(d18:1(4E)) + CMP + H(+). Functionally, transfers the sialyl residue from CMP-N-acetyl-beta-neuraminate to the terminal galactose residue on sugar chains of glycoproteins and glycolipids. It's alpha-2,3-sialyltransferase activity is specific toward type II glycan chains (Galbeta1-4GlcNAc) on glycoproteins and glycolipids such as neolactosides nLc4Cer and nLc6Cer, whose sialyl-products serve as precursors for the Lewis X antigen. Critically involved in the synthesis of functional selectin ligands needed for neutrophil recruitment during inflammation and lymphocyte homing to the lymph nodes. This is Type 2 lactosamine alpha-2,3-sialyltransferase (St3gal6) from Rattus norvegicus (Rat).